The primary structure comprises 351 residues: Cardiolipin synthase (CMP-forming) (351 aa).

The tract at residues 74–120 (PAPQLSASHQHQAQQQQQQTKQPQQPYDPQQDQVPSTSTASSSKPAA) is disordered. A compositionally biased stretch (low complexity) spans 76-120 (PQLSASHQHQAQQQQQQTKQPQQPYDPQQDQVPSTSTASSSKPAA). 5 consecutive transmembrane segments (helical) span residues 139-159 (PLIGYWLVQGHYEAATLALAV), 191-211 (VLIGCVAAALLMNGAMPGWVA), 251-271 (AAAAGAATGAANGVASGGGGG), 280-300 (PLLISKANTVLQLLLLGGYLL), and 321-341 (LIMGLELATAATTVASGLAYG).

Belongs to the CDP-alcohol phosphatidyltransferase class-I family. It depends on Mn(2+) as a cofactor.

It localises to the mitochondrion inner membrane. It carries out the reaction a CDP-1,2-diacyl-sn-glycerol + a 1,2-diacyl-sn-glycero-3-phospho-(1'-sn-glycerol) = a cardiolipin + CMP + H(+). Catalyzes the synthesis of cardiolipin (CL) (diphosphatidylglycerol) by specifically transferring a phosphatidyl group from CDP-diacylglycerol to phosphatidylglycerol (PG). CL is a key phospholipid in mitochondrial membranes and plays important roles in maintaining the functional integrity and dynamics of mitochondria under both optimal and stress conditions. Cannot catalyze the phosphatidyl group transfer from one PG molecule to another to form CL. This is Cardiolipin synthase (CMP-forming) from Chlamydomonas reinhardtii (Chlamydomonas smithii).